The following is a 365-amino-acid chain: Membrane-bound lytic murein transglycosylase C (365 aa).

The first 19 residues, 1-19 (MKKYTKYLPLLLIIPFLAA), serve as a signal peptide directing secretion. Residue Cys20 is the site of N-palmitoyl cysteine attachment. Cys20 carries S-diacylglycerol cysteine lipidation.

Belongs to the transglycosylase Slt family.

The protein resides in the cell outer membrane. The catalysed reaction is Exolytic cleavage of the (1-&gt;4)-beta-glycosidic linkage between N-acetylmuramic acid (MurNAc) and N-acetylglucosamine (GlcNAc) residues in peptidoglycan, from either the reducing or the non-reducing ends of the peptidoglycan chains, with concomitant formation of a 1,6-anhydrobond in the MurNAc residue.. Its function is as follows. Murein-degrading enzyme. May play a role in recycling of muropeptides during cell elongation and/or cell division. The protein is Membrane-bound lytic murein transglycosylase C of Actinobacillus pleuropneumoniae serotype 5b (strain L20).